The primary structure comprises 756 residues: Phosphate transporter PHO1 homolog 6 (756 aa).

The SPX domain maps to 1–303 (MKFGKDFSSE…SRDAAKSYMK (303 aa)). At 1–355 (MKFGKDFSSE…KPKRERHRLT (355 aa)) the chain is on the cytoplasmic side. Residues 356–376 (FSTGFLGGCMFSLIVALVAIV) form a helical membrane-spanning segment. At 377–396 (RTRNILQDDGQKQYMNTMFP) the chain is on the extracellular side. Residues 397–417 (LYSLFGFIMLHMTMYAANIYF) traverse the membrane as a helical segment. Residues 418-440 (WRQYRVNYSFIFGFKQGTELGYK) are Cytoplasmic-facing. A helical transmembrane segment spans residues 441–461 (QVLFVGFSIGALALLCVLANL). The Extracellular segment spans residues 462–477 (DMETDPKTKDYQALTE). A helical transmembrane segment spans residues 478–498 (LLPLFLLIAMFVVLVVPFNIF). Topologically, residues 499–631 (YRSSRFFFLT…DEKDRQIIWR (133 aa)) are cytoplasmic. An EXS domain is found at 562–756 (KDSQVFNTFL…SLPFNYEVDH (195 aa)). Residues 632-652 (LLGGITSAMAVVFCTYWDLVY) form a helical membrane-spanning segment. Topologically, residues 653 to 676 (DWGLLNRTSKNPWLRDNLLIPHKE) are extracellular. Residues 677–697 (VYVLAMILNVVLRFAWMQTVL) form a helical membrane-spanning segment. The Cytoplasmic segment spans residues 698–756 (DFKFESIHTQTVVAVVASLEIIRRGIWNFFRLENEHLNNVGKYRAFKAVSLPFNYEVDH).

Belongs to the SYG1 (TC 2.A.94) family. Specifically expressed in anther connective tissue.

The protein localises to the cell membrane. Its function is as follows. May transport inorganic phosphate (Pi). This is Phosphate transporter PHO1 homolog 6 (PHO1-H6) from Arabidopsis thaliana (Mouse-ear cress).